The primary structure comprises 217 residues: Large ribosomal subunit protein uL3 (217 aa).

The segment at Ala135–Thr154 is disordered. Gln153 is modified (N5-methylglutamine).

Belongs to the universal ribosomal protein uL3 family. As to quaternary structure, part of the 50S ribosomal subunit. Forms a cluster with proteins L14 and L19. Post-translationally, methylated by PrmB.

One of the primary rRNA binding proteins, it binds directly near the 3'-end of the 23S rRNA, where it nucleates assembly of the 50S subunit. The chain is Large ribosomal subunit protein uL3 from Coxiella burnetii (strain CbuG_Q212) (Coxiella burnetii (strain Q212)).